A 287-amino-acid polypeptide reads, in one-letter code: Serine/arginine-rich SC35-like splicing factor SCL33 (287 aa).

The tract at residues 1–34 (MRGRSYTPSPPRGYGRRGRSPSPRGRYGGRSRDL) is disordered. Residues S9 and S20 each carry the phosphoserine modification. Residues 36 to 114 (TSLLVRNLRH…RELTVVFAEE (79 aa)) enclose the RRM domain. Over residues 116–132 (RKKPTEMRARERGGGRF) the composition is skewed to basic and acidic residues. The tract at residues 116–287 (RKKPTEMRAR…QYDEDRSPSQ (172 aa)) is disordered. 5 positions are modified to phosphoserine: S165, S175, S177, S188, and S190. Residues 177–187 (SPREERYDGRR) are compositionally biased toward basic and acidic residues. Residues 220–237 (SISRSPRRSRSPSPKRNR) show a composition bias toward basic residues. A phosphoserine mark is found at S238, S248, S271, S284, and S286. Residues 244–260 (SISRSPRRSRSPRRSRR) are compositionally biased toward basic residues. Basic and acidic residues predominate over residues 278–287 (QYDEDRSPSQ).

The protein belongs to the splicing factor SR family. SCL subfamily. As to quaternary structure, component of the spliceosome. Homodimer. Interacts with AFC2, CYP59, RS2Z33, RNU1 and SR45. The interaction with AFC2 depends on phosphorylation status. Post-translationally, phosphorylated by AFC2. In terms of tissue distribution, ubiquitous. Mostly expressed in roots, fruits and flowers, and, to a lower extent, in leaves.

The protein resides in the nucleus speckle. It localises to the nucleus. Its subcellular location is the nucleoplasm. The protein localises to the cytoplasm. Its function is as follows. Involved in intron recognition and spliceosome assembly. Binds to multiple 5'-GAAG-3' repeats found in its third intron, suggesting autoregulation of alternative splicing. May be necessary for accurate splicing of the 3' region of introns. This Arabidopsis thaliana (Mouse-ear cress) protein is Serine/arginine-rich SC35-like splicing factor SCL33 (SCL33).